Consider the following 223-residue polypeptide: Translation initiation factor 6 (223 aa).

Belongs to the eIF-6 family.

In terms of biological role, binds to the 50S ribosomal subunit and prevents its association with the 30S ribosomal subunit to form the 70S initiation complex. The chain is Translation initiation factor 6 from Thermofilum pendens (strain DSM 2475 / Hrk 5).